A 934-amino-acid polypeptide reads, in one-letter code: MYSDFFNSIAFKWQAEWEKSKVFETNMDYSKPKFFITVPFPYTNSPMHVGHGRTYITADIYARYLRMKGYNVLFPFAFQFTGTPVLAIADSIRRGEVDVIEFFKNVYEVPQDKIKELEDPYKLAEYFKEEMKNTAKSIGMSIDWRRTFTTTDPRFEKFIHWQLGKLKELGYLVTEDDVVGYCPNDGFPVGMHDTRGDIEPEITTMNVIMFEGSDSYNFMVATSRPELIFGVVALMVNHDANYVVVEYEGKNFIISEKAYKKLSFQKNMKLVKTITTSDIVKLYAINPITGRKLEIIKNKYVDPSLGTGVVMSYPAHDPFHYLAMTETNKEFEVIPVVETEELDEIPGESAVLQTKNPYALKDFMESIYKTEYYKGYMKDIILSLVPDFLKQYVKENIVGKQVQEARKNTIELLKSLNIYDTIYEISNGPIYCRCGSEIVPKRIKDQWFIAYDNPKWKASALKAINNIELIPNPTKTELEKIVFNARKEPIGRSRGIGVKLPWDESQIVESLSDSTLYTLLYTVIYKMPINIEKEIFDFIFLGKGDAKELERKYGTDLIQLREEFLYWYPVDQRHTGRDLIQNHIPFYIYNHLAIFGEKYLPKRIVINGFVRVGGRKMSKSLRNIYTLSKAIKEFGVDPVRIALTSTSDLLQDLDFNENLVNPIAEQLKKIYDLIDRLLSINTEIKELRTADEWISSKVRDIIEKVNNNITSFKYRDAVNLLLYEIYEILRDYFDLVEIPNQEVIRKILSIWIRALAPFVPHIAEELWHKISSTFVSLEKYPEPNELNLYPDAILEISYINKIIENVRELEDIVHKKAEKVIIYINESEKVKELMKNAIKAVNEEIPLREFTANTEDKIAEKVYVVVSKLDKAIRDYLLNNEIDEEQIIVKNMNFLLRRLGVSEIVIYNAEDPTVPDVKGKKSQALPLSPAIVVE.

The 'HIGH' region signature appears at 41 to 51 (PYTNSPMHVGH). A 'KMSKS' region motif is present at residues 616–620 (KMSKS). Lys619 provides a ligand contact to ATP.

This sequence belongs to the class-I aminoacyl-tRNA synthetase family.

The protein localises to the cytoplasm. It carries out the reaction tRNA(Leu) + L-leucine + ATP = L-leucyl-tRNA(Leu) + AMP + diphosphate. The sequence is that of Leucine--tRNA ligase 1 from Saccharolobus solfataricus (strain ATCC 35092 / DSM 1617 / JCM 11322 / P2) (Sulfolobus solfataricus).